Here is a 159-residue protein sequence, read N- to C-terminus: Gigasin-1 (159 aa).

Disordered stretches follow at residues G1–T33 and K80–R159.

In terms of tissue distribution, component of the organic matrix of calcified shell layers.

This is Gigasin-1 from Magallana gigas (Pacific oyster).